A 563-amino-acid polypeptide reads, in one-letter code: Sulfite reductase [NADPH] hemoprotein beta-component (563 aa).

Residues Cys-427, Cys-433, Cys-472, and Cys-476 each contribute to the [4Fe-4S] cluster site. A siroheme-binding site is contributed by Cys-476.

This sequence belongs to the nitrite and sulfite reductase 4Fe-4S domain family. In terms of assembly, alpha(8)-beta(8). The alpha component is a flavoprotein, the beta component is a hemoprotein. Requires siroheme as cofactor. [4Fe-4S] cluster is required as a cofactor.

It carries out the reaction hydrogen sulfide + 3 NADP(+) + 3 H2O = sulfite + 3 NADPH + 4 H(+). Its pathway is sulfur metabolism; hydrogen sulfide biosynthesis; hydrogen sulfide from sulfite (NADPH route): step 1/1. In terms of biological role, component of the sulfite reductase complex that catalyzes the 6-electron reduction of sulfite to sulfide. This is one of several activities required for the biosynthesis of L-cysteine from sulfate. The sequence is that of Sulfite reductase [NADPH] hemoprotein beta-component from Acidithiobacillus ferrooxidans (strain ATCC 53993 / BNL-5-31) (Leptospirillum ferrooxidans (ATCC 53993)).